Here is a 152-residue protein sequence, read N- to C-terminus: MGIKVVATNKVAYHNYNIIETYEAGIVLKGSEVKSIREGSVNLRDSFVRIDNGEAFIYNMYIAPYKPASKLQHDPYRKRKLLLHKREILKLMGKVQEKGLTIIPTKVYLKNGKVKIEIALAKGKAKYEKREAIKERDMKRELSKKYKGKIKL.

It belongs to the SmpB family.

Its subcellular location is the cytoplasm. Its function is as follows. Required for rescue of stalled ribosomes mediated by trans-translation. Binds to transfer-messenger RNA (tmRNA), required for stable association of tmRNA with ribosomes. tmRNA and SmpB together mimic tRNA shape, replacing the anticodon stem-loop with SmpB. tmRNA is encoded by the ssrA gene; the 2 termini fold to resemble tRNA(Ala) and it encodes a 'tag peptide', a short internal open reading frame. During trans-translation Ala-aminoacylated tmRNA acts like a tRNA, entering the A-site of stalled ribosomes, displacing the stalled mRNA. The ribosome then switches to translate the ORF on the tmRNA; the nascent peptide is terminated with the 'tag peptide' encoded by the tmRNA and targeted for degradation. The ribosome is freed to recommence translation, which seems to be the essential function of trans-translation. The polypeptide is SsrA-binding protein (Persephonella marina (strain DSM 14350 / EX-H1)).